The chain runs to 287 residues: Large ribosomal subunit protein uL2 (287 aa).

The disordered stretch occupies residues 221 to 287; sequence RGSVMNPCDH…SKRSRGGRDS (67 aa). Positions 258-287 are enriched in basic residues; sequence KTRKRNKPSNKFVLRKRRKTSKRSRGGRDS.

Belongs to the universal ribosomal protein uL2 family. Part of the 50S ribosomal subunit. Forms a bridge to the 30S subunit in the 70S ribosome.

Functionally, one of the primary rRNA binding proteins. Required for association of the 30S and 50S subunits to form the 70S ribosome, for tRNA binding and peptide bond formation. It has been suggested to have peptidyltransferase activity; this is somewhat controversial. Makes several contacts with the 16S rRNA in the 70S ribosome. The protein is Large ribosomal subunit protein uL2 of Synechococcus sp. (strain RCC307).